A 249-amino-acid chain; its full sequence is Aspartate/glutamate leucyltransferase (249 aa).

The protein belongs to the R-transferase family. Bpt subfamily.

It is found in the cytoplasm. The enzyme catalyses N-terminal L-glutamyl-[protein] + L-leucyl-tRNA(Leu) = N-terminal L-leucyl-L-glutamyl-[protein] + tRNA(Leu) + H(+). It carries out the reaction N-terminal L-aspartyl-[protein] + L-leucyl-tRNA(Leu) = N-terminal L-leucyl-L-aspartyl-[protein] + tRNA(Leu) + H(+). In terms of biological role, functions in the N-end rule pathway of protein degradation where it conjugates Leu from its aminoacyl-tRNA to the N-termini of proteins containing an N-terminal aspartate or glutamate. In Brucella anthropi (strain ATCC 49188 / DSM 6882 / CCUG 24695 / JCM 21032 / LMG 3331 / NBRC 15819 / NCTC 12168 / Alc 37) (Ochrobactrum anthropi), this protein is Aspartate/glutamate leucyltransferase.